The primary structure comprises 392 residues: ER-bound oxygenase mpaB (392 aa).

The Lumenal segment spans residues 1 to 21 (MSLPLPPALSELARALPYSRT). A helical membrane pass occupies residues 22-41 (QWLPIFVGFLIGYPILIRAL). The Cytoplasmic segment spans residues 42–392 (RYKRHGEMKK…WSKYHATTND (351 aa)). The interval 352–376 (DLGQKKGPQGDPGNDEGIKDLKDGE) is disordered. The span at 367–376 (EGIKDLKDGE) shows a compositional bias: basic and acidic residues.

This sequence belongs to the mpaB oxygenase family.

The protein localises to the endoplasmic reticulum membrane. The enzyme catalyses 4-farnesyl-3,5-dihydroxy-6-methylphthalide + AH2 + 2 O2 = (4E,8E)-10-(4,6-dihydroxy-7-methyl-3-oxo-1,3-dihydro-2-benzofuran-5-yl)-4,8-dimethyldeca-4,8-dienoate + acetone + A + H2O + H(+). It participates in secondary metabolite biosynthesis; terpenoid biosynthesis. In terms of biological role, ER-bound oxygenase; part of the gene cluster that mediates the biosynthesis of mycophenolic acid (MPA), the first isolated antibiotic natural product in the world obtained from a culture of Penicillium brevicompactum in 1893. MpaB catalyzes the oxidative cleavage the C19-C20 double bond in farnesyl-DHMP (FDHMP) to yield FDHMP-3C via a mycophenolic aldehyde intermediate. The first step of the pathway is the synthesis of 5-methylorsellinic acid (5MOA) by the cytosolic polyketide synthase mpaC. 5MOA is then converted to the phthalide compound 5,7-dihydroxy-4,6-dimethylphthalide (DHMP) by the endoplasmic reticulum-bound cytochrome P450 monooxygenase mpaDE. MpaDE first catalyzes hydroxylation of 5-MOA to 4,6-dihydroxy-2-(hydroxymethyl)-3-methylbenzoic acid (DHMB). MpaDE then acts as a lactone synthase that catalyzes the ring closure to convert DHMB into DHMP. The next step is the prenylation of DHMP by the Golgi apparatus-associated prenyltransferase mpaA to yield farnesyl-DHMP (FDHMP). The ER-bound oxygenase mpaB then mediates the oxidative cleavage the C19-C20 double bond in FDHMP to yield FDHMP-3C via a mycophenolic aldehyde intermediate. The O-methyltransferase mpaG catalyzes the methylation of FDHMP-3C to yield MFDHMP-3C. After the cytosolic methylation of FDHMP-3C, MFDHMP-3C enters into peroxisomes probably via free diffusion due to its low molecular weight. Upon a peroxisomal CoA ligation reaction, catalyzed by a beta-oxidation component enzyme acyl-CoA ligase ACL891, MFDHMP-3C-CoA would then be restricted to peroxisomes for the following beta-oxidation pathway steps. The peroxisomal beta-oxidation machinery than converts MFDHMP-3C-CoA into MPA_CoA, via a beta-oxidation chain-shortening process. Finally mpaH acts as a peroxisomal acyl-CoA hydrolase with high substrate specificity toward MPA-CoA to release the final product MPA. This Penicillium brevicompactum protein is ER-bound oxygenase mpaB.